Here is a 657-residue protein sequence, read N- to C-terminus: Pentatricopeptide repeat-containing protein At2g37310 (657 aa).

15 PPR repeats span residues 21 to 55 (DGGAYGHLIQHFTRHRLPLHVLQLHARIVVFSIKP), 56 to 86 (DNFLASKLISFYTRQDRFRQALHVFDEITVR), 87 to 121 (NAFSYNALLIAYTSREMYFDAFSLFLSWIGSSCYS), 128 to 165 (DSISISCVLKALSGCDDFWLGSLARQVHGFVIRGGFDS), 166 to 196 (DVFVGNGMITYYTKCDNIESARKVFDEMSER), 197 to 232 (DVVSWNSMISGYSQSGSFEDCKKMYKAMLACSDFKP), 233 to 267 (NGVTVISVFQACGQSSDLIFGLEVHKKMIENHIQM), 268 to 298 (DLSLCNAVIGFYAKCGSLDYARALFDEMSEK), 299 to 333 (DSVTYGAIISGYMAHGLVKEAMALFSEMESIGLST), 334 to 364 (WNAMISGLMQNNHHEEVINSFREMIRCGSRP), 365 to 399 (NTVTLSSLLPSLTYSSNLKGGKEIHAFAIRNGADN), 400 to 430 (NIYVTTSIIDNYAKLGFLLGAQRVFDNCKDR), 431 to 465 (SLIAWTAIITAYAVHGDSDSACSLFDQMQCLGTKP), 466 to 501 (DDVTLTAVLSAFAHSGDSDMAQHIFDSMLTKYDIEP), and 502 to 536 (GVEHYACMVSVLSRAGKLSDAMEFISKMPIDPIAK). Residues 537–612 (VWGALLNGAS…IPGTSWIETE (76 aa)) are type E motif. Residues 613–643 (KGLRSFIAKDSSCERSKEMYEIIEGLVESMS) are type E(+) motif.

It belongs to the PPR family. PCMP-E subfamily.

This is Pentatricopeptide repeat-containing protein At2g37310 (PCMP-E49) from Arabidopsis thaliana (Mouse-ear cress).